Consider the following 187-residue polypeptide: Large ribosomal subunit protein uL5 (187 aa).

It belongs to the universal ribosomal protein uL5 family. As to quaternary structure, part of the 50S ribosomal subunit; part of the 5S rRNA/L5/L18/L25 subcomplex. Contacts the 5S rRNA and the P site tRNA. Forms a bridge to the 30S subunit in the 70S ribosome.

Its function is as follows. This is one of the proteins that bind and probably mediate the attachment of the 5S RNA into the large ribosomal subunit, where it forms part of the central protuberance. In the 70S ribosome it contacts protein S13 of the 30S subunit (bridge B1b), connecting the 2 subunits; this bridge is implicated in subunit movement. Contacts the P site tRNA; the 5S rRNA and some of its associated proteins might help stabilize positioning of ribosome-bound tRNAs. The chain is Large ribosomal subunit protein uL5 from Dinoroseobacter shibae (strain DSM 16493 / NCIMB 14021 / DFL 12).